A 718-amino-acid chain; its full sequence is Sodium/myo-inositol cotransporter (718 aa).

The Extracellular segment spans residues 1 to 9 (MRAVLETAD). The chain crosses the membrane as a helical span at residues 10–29 (IAIVALYFILVMCIGFFAMW). Topologically, residues 30–38 (KSNRSTVSG) are cytoplasmic. A helical membrane pass occupies residues 39 to 57 (YFLAGRSMTWVAIGASLFV). The Extracellular portion of the chain corresponds to 58-86 (SNIGSEHFIGLAGSGAASGFAVGAWEFNA). The chain crosses the membrane as a helical span at residues 87–110 (LLLLQLLGWVFIPIYIRSGVYTMP). Residues 111 to 123 (EYLSKRFGGHRIQ) are Cytoplasmic-facing. The helical transmembrane segment at 124-144 (VYFAALSLILYIFTKLSVDLY) threads the bilayer. Over 145-157 (SGALFIQESMGWN) the chain is Extracellular. Residues 158-183 (LYVSVILLIGMTALLTVTGGLVAVIY) form a helical membrane-spanning segment. Over 184-186 (TDT) the chain is Cytoplasmic. Residues 187–205 (LQALLMIVGALTLMVISMM) traverse the membrane as a helical segment. Residues 206–303 (EIGGFEEVKR…HAKGSTLMAG (98 aa)) lie on the Extracellular side of the membrane. A glycan (N-linked (GlcNAc...) asparagine) is linked at Asn232. The chain crosses the membrane as a helical span at residues 304-324 (FLKLLPMFIIVVPGMISRILF). The Cytoplasmic portion of the chain corresponds to 325-353 (ADDIACINPEHCMQVCGSRAGCSNIAYPR). A helical membrane pass occupies residues 354–376 (LVMKLVPVGLRGLMMAVMIAALM). At 377 to 406 (SDLDSIFNSASTIFTLDVYKLIRKSASSRE) the chain is on the extracellular side. The helical transmembrane segment at 407–430 (LMIVGRIFVAFMVVISIAWVPIIV) threads the bilayer. Topologically, residues 431–443 (EMQGGQMYLYIQE) are cytoplasmic. A helical membrane pass occupies residues 444 to 462 (VADYLTPPVAALFLLAIFW). Residues 463–510 (KRCNEQGAFYGGMAGFILVVVRLTLAFAYRAPECDQPDNRPVFIKDIH) lie on the Extracellular side of the membrane. Residues 511 to 532 (YMYVATALFWITGLITVIVSLL) traverse the membrane as a helical segment. Residues 533–695 (TPPPTKEQIR…QMLEEPPQVK (163 aa)) lie on the Cytoplasmic side of the membrane. Ser594 and Ser632 each carry phosphoserine. Residues 696 to 716 (VILNIGLFGVCSLGIFMFVYF) form a helical membrane-spanning segment. The Extracellular segment spans residues 717-718 (SL).

It belongs to the sodium:solute symporter (SSF) (TC 2.A.21) family. In terms of assembly, interacts with KCNQ2 (via the pore module). Interacts with KCNQ1; this interaction is direct. Forms coregulatory complexes with ion channels KCNQ2-KCNQ3 and KCNQ1-KCNE2.

Its subcellular location is the apical cell membrane. It localises to the basolateral cell membrane. Its function is as follows. Electrogenic Na(+)-coupled sugar symporter that actively transports myo-inositol and its stereoisomer scyllo-inositol across the plasma membrane, with a Na(+) to sugar coupling ratio of 2:1. Maintains myo-inositol concentration gradient that defines cell volume and fluid balance during osmotic stress, in particular in the fetoplacental unit and central nervous system. Forms coregulatory complexes with voltage-gated K(+) ion channels, allosterically altering ion selectivity, voltage dependence and gating kinetics of the channel. In turn, K(+) efflux through the channel forms a local electrical gradient that modulates electrogenic Na(+)-coupled myo-inositol influx through the transporter. Associates with KCNQ1-KCNE2 channel in the apical membrane of choroid plexus epithelium and regulates the myo-inositol gradient between blood and cerebrospinal fluid with an impact on neuron excitability. Associates with KCNQ2-KCNQ3 channel altering ion selectivity, increasing Na(+) and Cs(+) permeation relative to K(+) permeation. Provides myo-inositol precursor for biosynthesis of phosphoinositides such as PI(4,5)P2, thus indirectly affecting the activity of phosphoinositide-dependent ion channels and Ca(2+) signaling upon osmotic stress. This is Sodium/myo-inositol cotransporter (SLC5A3) from Bos taurus (Bovine).